We begin with the raw amino-acid sequence, 220 residues long: Glutathione S-transferase-like protein FUS3 (220 aa).

A GST N-terminal domain is found at 3 to 84 (SFGTLYTYMP…YVAQSGPQAS (82 aa)). Residues 90–220 (DAMSSAKIRQ…LIEKRRIGAK (131 aa)) enclose the GST C-terminal domain.

The protein belongs to the GST superfamily.

In terms of biological role, glutathione S-transferase-like protein; part of the gene cluster that mediates the biosynthesis of the mycotoxin fusarin C. Within the cluster, FUS1, FUS2, FUS8 and FUS9 are sufficient for fusarin production. The other FUS cluster members are not essential for fusarin C biosynthesis. This chain is Glutathione S-transferase-like protein FUS3, found in Gibberella moniliformis (strain M3125 / FGSC 7600) (Maize ear and stalk rot fungus).